Here is a 302-residue protein sequence, read N- to C-terminus: Dihydroorotate dehydrogenase B (NAD(+)), catalytic subunit (302 aa).

FMN-binding positions include Ser-20 and 44–45 (KG). Substrate contacts are provided by residues Lys-44 and 68-72 (NSVGL). 2 residues coordinate FMN: Asn-98 and Asn-125. Position 125 (Asn-125) interacts with substrate. The active-site Nucleophile is Cys-128. Residues Lys-163 and Ile-189 each contribute to the FMN site. 190-191 (NT) lines the substrate pocket. Residues Gly-215, 241–242 (GG), and 263–264 (GT) contribute to the FMN site.

This sequence belongs to the dihydroorotate dehydrogenase family. Type 1 subfamily. In terms of assembly, heterotetramer of 2 PyrK and 2 PyrD type B subunits. The cofactor is FMN.

Its subcellular location is the cytoplasm. The enzyme catalyses (S)-dihydroorotate + NAD(+) = orotate + NADH + H(+). Its pathway is pyrimidine metabolism; UMP biosynthesis via de novo pathway; orotate from (S)-dihydroorotate (NAD(+) route): step 1/1. Its function is as follows. Catalyzes the conversion of dihydroorotate to orotate with NAD(+) as electron acceptor. This Thermoanaerobacter pseudethanolicus (strain ATCC 33223 / 39E) (Clostridium thermohydrosulfuricum) protein is Dihydroorotate dehydrogenase B (NAD(+)), catalytic subunit (pyrD).